The primary structure comprises 879 residues: Nuclear autoantigen Sp-100 (879 aa).

Alanine 2 is subject to N-acetylalanine. At serine 18 the chain carries Phosphoserine. Residues 33–149 (DLQRMFTEDQ…IYKGFENVIH (117 aa)) enclose the HSR domain. The disordered stretch occupies residues 154 to 245 (LQESEEEERE…EQCAQKAEPT (92 aa)). Serine 157 is modified (phosphoserine). Residues 165–168 (RSGL) carry the D-box; recognition signal for CDC20-mediated degradation motif. 3 positions are modified to phosphoserine: serine 171, serine 180, and serine 228. The segment covering 176-200 (TGENSFRSLTWPPSGSPSHAGTTPP) has biased composition (polar residues). Residues 207–228 (HPCETEQINAKRKDTTSDKDDS) are compositionally biased toward basic and acidic residues. Positions 229 to 238 (LGSQQTNEQC) are enriched in polar residues. Residue lysine 241 forms a Glycyl lysine isopeptide (Lys-Gly) (interchain with G-Cter in SUMO2) linkage. Residues 284–297 (IQINSCSVRLVDIK) carry the PxVxL motif motif. Lysine 297 participates in a covalent cross-link: Glycyl lysine isopeptide (Lys-Gly) (interchain with G-Cter in SUMO). Glycyl lysine isopeptide (Lys-Gly) (interchain with G-Cter in SUMO2) cross-links involve residues lysine 300 and lysine 306. Phosphoserine is present on residues serine 331 and serine 362. The interval 333 to 478 (GSTDVDEPLE…SSSLRRGSGS (146 aa)) is sufficient to mediate interaction with ETS1. The segment at 345–386 (ISAPRSEPVINNDNPLESNDEKEGQEATCSRPQIVPEPMDFR) is disordered. Residues lysine 366 and lysine 387 each participate in a glycyl lysine isopeptide (Lys-Gly) (interchain with G-Cter in SUMO2) cross-link. Serine 394, serine 407, serine 409, serine 410, and serine 451 each carry phosphoserine. The disordered stretch occupies residues 401–596 (GQDHDFSESS…KRGPRIPKDE (196 aa)). Residues 466–482 (ETCSSSLRRGSGSQPQE) are compositionally biased toward polar residues. Positions 530-591 (SGKRRKKRRH…LKRRRKRGPR (62 aa)) are enriched in basic residues. Short sequence motifs (nuclear localization signal) lie at residues 536–553 (KRRH…RKKD) and 568–592 (KRWQ…GPRI). Lysine 594 is covalently cross-linked (Glycyl lysine isopeptide (Lys-Gly) (interchain with G-Cter in SUMO2)). The SAND domain maps to 595-676 (DENINFKQSE…KVLMENKFLP (82 aa)). DNA-binding regions (HMG box) lie at residues 677-753 (EPPS…KTYI) and 769-837 (PKRP…AAYR). A Nuclear localization signal motif is present at residues 717–734 (KKCSETWKTIFAKEKGKF). The interval 835-879 (AYRAKGKPNSAKKRVVKAEKSKKKKEEEEDEEDEQEEENEEDDDK) is disordered. Basic residues predominate over residues 838 to 857 (AKGKPNSAKKRVVKAEKSKK). Positions 861–879 (EEEDEEDEQEEENEEDDDK) are enriched in acidic residues.

As to quaternary structure, homodimer; isoforms are able to heterodimerize. Interacts with members of the HP1 family of nonhistone chromosomal protein, such as CBX5 and CBX3 via the PxVxL motif. Interacts with ETS1; the interaction is direct and modulates ETS1 transcriptional activity. Interacts with the MRN complex which is composed of two heterodimers RAD50/MRE11 associated with a single NBN; recruits the complex to PML-related bodies. Interacts with HIPK2; positively regulates TP53-dependent transcription. Interacts with CASP8AP2; may negatively regulate CASP8AP2 export from the nucleus to the cytoplasm. Interacts with SUMO1P1/SUMO5. (Microbial infection) Interacts with Epstein-Barr virus EBNA-LP; this interaction is important for EBNA-LP coactivator activity. In terms of assembly, (Microbial infection) Interacts with human cytomegalovirus/HHV-5 protein UL123; may play a role in infection by the virus. Post-translationally, sumoylated. Sumoylation depends on a functional nuclear localization signal but is not necessary for nuclear import or nuclear body targeting. Sumoylated. Sumoylated with SUMO1. Sumoylation depends on a functional nuclear localization signal but is not necessary for nuclear import or nuclear body targeting. Sumoylation may stabilize the interaction with CBX5. In terms of processing, (Microbial infection) Immediate early protein IE1 of human cytomegalovirus (HHV-5) interferes with the sumoylation of SP100. In terms of tissue distribution, widely expressed. Sp100-B is expressed only in spleen, tonsil, thymus, mature B-cell line and some T-cell line, but not in brain, liver, muscle or non-lymphoid cell lines.

The protein resides in the nucleus. The protein localises to the PML body. It localises to the nuclear body. Its subcellular location is the cytoplasm. Functionally, together with PML, this tumor suppressor is a major constituent of the PML bodies, a subnuclear organelle involved in a large number of physiological processes including cell growth, differentiation and apoptosis. Functions as a transcriptional coactivator of ETS1 and ETS2 according to PubMed:11909962. Under certain conditions, it may also act as a corepressor of ETS1 preventing its binding to DNA according to PubMed:15247905. Through the regulation of ETS1 it may play a role in angiogenesis, controlling endothelial cell motility and invasion. Through interaction with the MRN complex it may be involved in the regulation of telomeres lengthening. May also regulate TP53-mediated transcription and through CASP8AP2, regulate FAS-mediated apoptosis. Also plays a role in infection by viruses, including human cytomegalovirus and Epstein-Barr virus, through mechanisms that may involve chromatin and/or transcriptional regulation. This chain is Nuclear autoantigen Sp-100 (SP100), found in Homo sapiens (Human).